Consider the following 1213-residue polypeptide: A disintegrin and metalloproteinase with thrombospondin motifs 19 (1213 aa).

The N-terminal stretch at 1–27 (MGKNREMRLTHICCCCLLYQLGFLSNG) is a signal peptide. Positions 28–322 (IVSELQFAPD…KIAESGRGKR (295 aa)) are excised as a propeptide. 2 disordered regions span residues 49–161 (WRRE…PPPA) and 192–215 (FLAP…AASA). The segment covering 52-71 (EPVDPAGGSGGSADPGWVRG) has biased composition (gly residues). Acidic residues predominate over residues 110–119 (RPPPPSEGEE). Low complexity predominate over residues 120–139 (DEELESQELPRGSSGAAALS). Residues 140-155 (PGAPASWQPPPPPQPP) are compositionally biased toward pro residues. The N-linked (GlcNAc...) asparagine glycan is linked to Asn-266. A Cysteine switch motif is present at residues 298 to 305 (HYCGIISD). Cys-300 is a Zn(2+) binding site. Positions 331–551 (YNIETVVVAD…KASNCLLQTN (221 aa)) constitute a Peptidase M12B domain. 11 disulfide bridges follow: Cys-407–Cys-472, Cys-447–Cys-454, Cys-466–Cys-546, Cys-505–Cys-530, Cys-575–Cys-599, Cys-586–Cys-607, Cys-594–Cys-626, Cys-620–Cys-631, Cys-651–Cys-686, Cys-655–Cys-691, and Cys-666–Cys-676. His-488 lines the Zn(2+) pocket. The active site involves Glu-489. Residues His-492 and His-498 each contribute to the Zn(2+) site. In terms of domain architecture, Disintegrin spans 552 to 639 (PQSVNSVMVP…ECTSRTSAPE (88 aa)). Positions 640–692 (HLAGEWSLWSPCSRTCSAGISSRERKCPGLDSEARDCNGPRKQYRICENPPCP) constitute a TSP type-1 1 domain. A spacer region spans residues 797-920 (IIKGDFNHTR…PENQSSKAPE (124 aa)). Asn-803, Asn-913, Asn-955, and Asn-1015 each carry an N-linked (GlcNAc...) asparagine glycan. 4 TSP type-1 domains span residues 921–981 (PLFM…NEQP), 982–1043 (CQTR…QDCM), 1045–1089 (VWEA…EDCE), and 1093–1150 (KCYV…QPCN). Intrachain disulfides connect Cys-994–Cys-1037, Cys-998–Cys-1042, and Cys-1009–Cys-1026. The 40-residue stretch at 1166 to 1205 (LTFKCLGDQWPVYCRVIREKNLCQDMRWYQRCCETCRDFY) folds into the PLAC domain.

It depends on Zn(2+) as a cofactor. In terms of processing, the precursor is cleaved by a furin endopeptidase. Post-translationally, glycosylated. Can be O-fucosylated by POFUT2 on a serine or a threonine residue found within the consensus sequence C1-X(2)-(S/T)-C2-G of the TSP type-1 repeat domains where C1 and C2 are the first and second cysteine residue of the repeat, respectively. Fucosylated repeats can then be further glycosylated by the addition of a beta-1,3-glucose residue by the glucosyltransferase, B3GALTL. Fucosylation mediates the efficient secretion of ADAMTS family members. Can also be C-glycosylated with one or two mannose molecules on tryptophan residues within the consensus sequence W-X-X-W of the TPRs, and N-glycosylated. These other glycosylations can also facilitate secretion. In terms of tissue distribution, expressed in fetal lung, but not in any adult tissues examined. Expression was detected in an osteosarcoma cDNA library.

The protein localises to the secreted. The protein resides in the extracellular space. It is found in the extracellular matrix. The chain is A disintegrin and metalloproteinase with thrombospondin motifs 19 (ADAMTS19) from Homo sapiens (Human).